The sequence spans 209 residues: Thymidylate kinase (209 aa).

Gly7 to Ser14 contacts ATP.

Belongs to the thymidylate kinase family.

It carries out the reaction dTMP + ATP = dTDP + ADP. Phosphorylation of dTMP to form dTDP in both de novo and salvage pathways of dTTP synthesis. The protein is Thymidylate kinase of Solidesulfovibrio magneticus (strain ATCC 700980 / DSM 13731 / RS-1) (Desulfovibrio magneticus).